The primary structure comprises 166 residues: Large ribosomal subunit protein uL18c (166 aa).

The N-terminal 44 residues, 1–44 (MAAATSLSFFHSTLASSSSSSVQQLSLPPKFVNFRPQTLPLIQA), are a transit peptide targeting the chloroplast.

The protein belongs to the universal ribosomal protein uL18 family. As to quaternary structure, component of the chloroplast large ribosomal subunit (LSU). Mature 70S chloroplast ribosomes of higher plants consist of a small (30S) and a large (50S) subunit. The 30S small subunit contains 1 molecule of ribosomal RNA (16S rRNA) and 24 different proteins. The 50S large subunit contains 3 rRNA molecules (23S, 5S and 4.5S rRNA) and 33 different proteins.

Its subcellular location is the plastid. The protein localises to the chloroplast. Component of the chloroplast ribosome (chloro-ribosome), a dedicated translation machinery responsible for the synthesis of chloroplast genome-encoded proteins, including proteins of the transcription and translation machinery and components of the photosynthetic apparatus. The chain is Large ribosomal subunit protein uL18c (RPL18) from Spinacia oleracea (Spinach).